The sequence spans 320 residues: uncharacterized protein (320 aa).

Helical transmembrane passes span 107 to 127, 131 to 151, 169 to 189, 200 to 220, 228 to 248, 260 to 280, and 299 to 319; these read LSKE…AGIY, VALL…IALS, LIAE…YLPI, ITLD…GSLS, IAVG…FGLL, ALIL…VIFS, and TLYA…LIIY.

Its subcellular location is the cell membrane. This is an uncharacterized protein from Methanocaldococcus jannaschii (strain ATCC 43067 / DSM 2661 / JAL-1 / JCM 10045 / NBRC 100440) (Methanococcus jannaschii).